Reading from the N-terminus, the 228-residue chain is Octanoyltransferase (228 aa).

A BPL/LPL catalytic domain is found at 31-212 (GETDGILILL…KFSEVFGIHF (182 aa)). Substrate contacts are provided by residues 76–83 (RGGKITFH), 143–145 (AIG), and 156–158 (GIA). Residue C174 is the Acyl-thioester intermediate of the active site.

It belongs to the LipB family.

Its subcellular location is the cytoplasm. It catalyses the reaction octanoyl-[ACP] + L-lysyl-[protein] = N(6)-octanoyl-L-lysyl-[protein] + holo-[ACP] + H(+). It participates in protein modification; protein lipoylation via endogenous pathway; protein N(6)-(lipoyl)lysine from octanoyl-[acyl-carrier-protein]: step 1/2. Catalyzes the transfer of endogenously produced octanoic acid from octanoyl-acyl-carrier-protein onto the lipoyl domains of lipoate-dependent enzymes. Lipoyl-ACP can also act as a substrate although octanoyl-ACP is likely to be the physiological substrate. This chain is Octanoyltransferase, found in Thermoanaerobacter pseudethanolicus (strain ATCC 33223 / 39E) (Clostridium thermohydrosulfuricum).